The sequence spans 222 residues: N-(5'-phosphoribosyl)anthranilate isomerase (222 aa).

Belongs to the TrpF family.

It carries out the reaction N-(5-phospho-beta-D-ribosyl)anthranilate = 1-(2-carboxyphenylamino)-1-deoxy-D-ribulose 5-phosphate. Its pathway is amino-acid biosynthesis; L-tryptophan biosynthesis; L-tryptophan from chorismate: step 3/5. The sequence is that of N-(5'-phosphoribosyl)anthranilate isomerase from Rhizobium etli (strain CIAT 652).